The sequence spans 152 residues: Flagellar assembly factor FliW (152 aa).

It belongs to the FliW family. Interacts with translational regulator CsrA and flagellin(s).

It is found in the cytoplasm. In terms of biological role, acts as an anti-CsrA protein, binds CsrA and prevents it from repressing translation of its target genes, one of which is flagellin. Binds to flagellin and participates in the assembly of the flagellum. This Caldicellulosiruptor bescii (strain ATCC BAA-1888 / DSM 6725 / KCTC 15123 / Z-1320) (Anaerocellum thermophilum) protein is Flagellar assembly factor FliW.